Consider the following 838-residue polypeptide: Ras-interacting protein RIP3 (838 aa).

Disordered stretches follow at residues 66 to 97 (VSTSNNNATSGNSTPPNNAISPNQQQQQQQQA), 157 to 290 (KPTT…TSPK), and 305 to 336 (NSKTLQKSDKTSEKENKQQQPDSSKTQQQQQA). 3 stretches are compositionally biased toward low complexity: residues 67 to 97 (STSNNNATSGNSTPPNNAISPNQQQQQQQQA), 157 to 241 (KPTT…QQKP), and 248 to 284 (PQNISQPQNISQQQNTNNVQQNNQQQQQQQQQQQQQQ). Positions 310–321 (QKSDKTSEKENK) are enriched in basic and acidic residues. The 75-residue stretch at 441 to 515 (QLKVRVIEKA…KDEVLVLCPN (75 aa)) folds into the CRIM domain. Disordered regions lie at residues 522–581 (KSSS…QQTQ) and 594–646 (QQQQ…GPDA). 3 stretches are compositionally biased toward low complexity: residues 537–556 (NNNNSVNSNSSNNSNSSNNN), 563–581 (QPQQSQQQQQQTQQTQQTQ), and 594–620 (QQQQQQQQQHPQQIQQQLSSNQLQPDQ). The span at 621–631 (VGGGGGGGGGN) shows a compositional bias: gly residues. The RBD domain occupies 648–717 (LVVKITLPDS…GGADLILVSR (70 aa)).

This sequence belongs to the SIN1 family. As to quaternary structure, interacts with activated RasG. Part of a complex, TORC2, consisting of tor, lst8, piaA and ripA. Additional proteins, such as 14-3-3 and heat-shock proteins, may also belong to the TORC2 complex.

Functionally, component of a Ras-regulated pathway involved in integrating chemotaxis and signal relay pathways that are essential for aggregation. This Dictyostelium discoideum (Social amoeba) protein is Ras-interacting protein RIP3 (ripA).